The following is an 88-amino-acid chain: Alpha-conotoxin GVIIIB (88 aa).

An N-terminal signal peptide occupies residues 1–20 (MMSKMGAMFVLLLLFTLASS). A propeptide spanning residues 21–43 (QQEGDVQARKTRPKSDFYRALPR) is cleaved from the precursor. The residue at position 87 (T87) is a Threonine amide.

It belongs to the conotoxin S superfamily. Post-translationally, contains 5 disulfide bonds. In terms of processing, the predominant peptide contains 2 hydroxyprolines, while 2 minor peptides contains 1 and 3 hydroxyprolines. Expressed by the venom duct.

The protein localises to the secreted. In terms of biological role, alpha-conotoxins act on postsynaptic membranes, they bind to the nicotinic acetylcholine receptors (nAChR) and thus inhibit them. This toxin shows high activity on alpha-9-alpha-10 (CHRNA9-CHRNA10) (IC(50)=9.79 nM). It also shows weak activity on alpha-3-beta-2 (CHRNA3-CHRNB2) (IC(50)~1 uM), alpha-6/alpha-3-beta-2-beta-3 (CHRNA6/CHRNA3-CHRNB2-CHRNB3) (IC(50)~1 uM). The toxin binds to the same or overlapping binding sites than conotoxin RgIA (AC P0C1D0). This chain is Alpha-conotoxin GVIIIB, found in Conus geographus (Geography cone).